Consider the following 202-residue polypeptide: GTP cyclohydrolase 1 (202 aa).

C93, H96, and C164 together coordinate Zn(2+).

Belongs to the GTP cyclohydrolase I family. In terms of assembly, toroid-shaped homodecamer, composed of two pentamers of five dimers.

The enzyme catalyses GTP + H2O = 7,8-dihydroneopterin 3'-triphosphate + formate + H(+). The protein operates within cofactor biosynthesis; 7,8-dihydroneopterin triphosphate biosynthesis; 7,8-dihydroneopterin triphosphate from GTP: step 1/1. In Pelagibacter ubique (strain HTCC1062), this protein is GTP cyclohydrolase 1.